The primary structure comprises 373 residues: Glutamate 5-kinase (373 aa).

K15 is an ATP binding site. Residues S55, D142, and N154 each coordinate substrate. Position 174 to 175 (174 to 175) interacts with ATP; that stretch reads TD. Positions 281–359 constitute a PUA domain; it reads RGSVVLDDGA…SQIEAVLGYV (79 aa).

This sequence belongs to the glutamate 5-kinase family.

It localises to the cytoplasm. It carries out the reaction L-glutamate + ATP = L-glutamyl 5-phosphate + ADP. The protein operates within amino-acid biosynthesis; L-proline biosynthesis; L-glutamate 5-semialdehyde from L-glutamate: step 1/2. Catalyzes the transfer of a phosphate group to glutamate to form L-glutamate 5-phosphate. In Nitrosomonas eutropha (strain DSM 101675 / C91 / Nm57), this protein is Glutamate 5-kinase.